We begin with the raw amino-acid sequence, 297 residues long: 5'-3' exonuclease (297 aa).

A 5'-3' exonuclease domain is found at 171–262 (EPDQIVDFKA…MKLEKELFAI (92 aa)).

Functionally, 5'-3' exonuclease acting preferentially on double-stranded DNA. This chain is 5'-3' exonuclease (polA), found in Mycoplasmopsis pulmonis (strain UAB CTIP) (Mycoplasma pulmonis).